A 205-amino-acid polypeptide reads, in one-letter code: MDAIVKNFPLLDDTSGRPTQKEAEEAVRVLLRWAGEDPTREGLKDTPARVIKSYREIFGGYDLVAEDVLGRTFEEVSGYDDIVLEKDVPFYSHCEHHMVPIIGKAHVAYLPNGRVLGLSKIARVVDIYARRLQTQEAMTAQIARAIDETLAPRGVAVMIEAEHLCMAMRGIKKHGSTTLTTTFTGAFKTEPAEQARFMTLLRGFK.

3 residues coordinate Zn(2+): Cys94, His97, and Cys165.

Belongs to the GTP cyclohydrolase I family. Homomer.

It catalyses the reaction GTP + H2O = 7,8-dihydroneopterin 3'-triphosphate + formate + H(+). It functions in the pathway cofactor biosynthesis; 7,8-dihydroneopterin triphosphate biosynthesis; 7,8-dihydroneopterin triphosphate from GTP: step 1/1. This is GTP cyclohydrolase 1 from Sinorhizobium fredii (strain NBRC 101917 / NGR234).